A 381-amino-acid chain; its full sequence is Protein-glutamate methylesterase/protein-glutamine glutaminase 1 (381 aa).

The Response regulatory domain occupies 14–132; the sequence is RVMLVDDSAV…DLAGGVDFKS (119 aa). Residue Asp-65 is modified to 4-aspartylphosphate. The interval 143–173 is disordered; it reads QARRAGARPARPGGPPATRPVIASTSPRTPV. A compositionally biased stretch (low complexity) spans 144–153; the sequence is ARRAGARPAR. A CheB-type methylesterase domain is found at 188-381; it reads PEPPDIIAIG…PWIMKLAARR (194 aa). Catalysis depends on residues Ser-199, His-227, and Asp-323.

It belongs to the CheB family. Phosphorylated by CheA. Phosphorylation of the N-terminal regulatory domain activates the methylesterase activity.

It is found in the cytoplasm. The catalysed reaction is [protein]-L-glutamate 5-O-methyl ester + H2O = L-glutamyl-[protein] + methanol + H(+). It carries out the reaction L-glutaminyl-[protein] + H2O = L-glutamyl-[protein] + NH4(+). Its function is as follows. Involved in chemotaxis. Part of a chemotaxis signal transduction system that modulates chemotaxis in response to various stimuli. Catalyzes the demethylation of specific methylglutamate residues introduced into the chemoreceptors (methyl-accepting chemotaxis proteins or MCP) by CheR. Also mediates the irreversible deamidation of specific glutamine residues to glutamic acid. The chain is Protein-glutamate methylesterase/protein-glutamine glutaminase 1 from Paramagnetospirillum magneticum (strain ATCC 700264 / AMB-1) (Magnetospirillum magneticum).